Consider the following 584-residue polypeptide: Arginine--tRNA ligase (584 aa).

The short motif at 127–137 is the 'HIGH' region element; that stretch reads PNTNKPLHVGH.

Belongs to the class-I aminoacyl-tRNA synthetase family. Monomer.

It localises to the cytoplasm. The catalysed reaction is tRNA(Arg) + L-arginine + ATP = L-arginyl-tRNA(Arg) + AMP + diphosphate. The protein is Arginine--tRNA ligase of Borrelia turicatae (strain 91E135).